The primary structure comprises 272 residues: Ribosomal RNA small subunit methyltransferase A (272 aa).

S-adenosyl-L-methionine contacts are provided by N15, I17, G42, E64, D90, and N109.

Belongs to the class I-like SAM-binding methyltransferase superfamily. rRNA adenine N(6)-methyltransferase family. RsmA subfamily.

Its subcellular location is the cytoplasm. It catalyses the reaction adenosine(1518)/adenosine(1519) in 16S rRNA + 4 S-adenosyl-L-methionine = N(6)-dimethyladenosine(1518)/N(6)-dimethyladenosine(1519) in 16S rRNA + 4 S-adenosyl-L-homocysteine + 4 H(+). Its function is as follows. Specifically dimethylates two adjacent adenosines (A1518 and A1519) in the loop of a conserved hairpin near the 3'-end of 16S rRNA in the 30S particle. May play a critical role in biogenesis of 30S subunits. The polypeptide is Ribosomal RNA small subunit methyltransferase A (Wolbachia sp. subsp. Drosophila simulans (strain wRi)).